The primary structure comprises 78 residues: MAFQKRGGRRRRKVDYIAANHIEYIDYKDTELLKRFISERGKILPRRVSGTSAKNQRRLTIAIKRARIMGLLPFVAED.

The protein belongs to the bacterial ribosomal protein bS18 family. Part of the 30S ribosomal subunit. Forms a tight heterodimer with protein bS6.

Functionally, binds as a heterodimer with protein bS6 to the central domain of the 16S rRNA, where it helps stabilize the platform of the 30S subunit. The protein is Small ribosomal subunit protein bS18 of Pediococcus pentosaceus (strain ATCC 25745 / CCUG 21536 / LMG 10740 / 183-1w).